The following is a 127-amino-acid chain: Large ribosomal subunit protein bL20 (127 aa).

This sequence belongs to the bacterial ribosomal protein bL20 family.

Functionally, binds directly to 23S ribosomal RNA and is necessary for the in vitro assembly process of the 50S ribosomal subunit. It is not involved in the protein synthesizing functions of that subunit. This chain is Large ribosomal subunit protein bL20, found in Streptomyces griseus subsp. griseus (strain JCM 4626 / CBS 651.72 / NBRC 13350 / KCC S-0626 / ISP 5235).